The primary structure comprises 283 residues: Protein/nucleic acid deglycase HchA (283 aa).

Zn(2+) contacts are provided by histidine 86, glutamate 91, and histidine 123. Cysteine 185 (nucleophile) is an active-site residue.

Belongs to the peptidase C56 family. HchA subfamily. Homodimer.

The protein localises to the cytoplasm. It carries out the reaction N(omega)-(1-hydroxy-2-oxopropyl)-L-arginyl-[protein] + H2O = lactate + L-arginyl-[protein] + H(+). It catalyses the reaction N(6)-(1-hydroxy-2-oxopropyl)-L-lysyl-[protein] + H2O = lactate + L-lysyl-[protein] + H(+). The catalysed reaction is S-(1-hydroxy-2-oxopropyl)-L-cysteinyl-[protein] + H2O = lactate + L-cysteinyl-[protein] + H(+). The enzyme catalyses N(omega)-(1-hydroxy-2-oxoethyl)-L-arginyl-[protein] + H2O = L-arginyl-[protein] + glycolate + H(+). It carries out the reaction N(6)-(1-hydroxy-2-oxoethyl)-L-lysyl-[protein] + H2O = glycolate + L-lysyl-[protein] + H(+). It catalyses the reaction S-(1-hydroxy-2-oxoethyl)-L-cysteinyl-[protein] + H2O = glycolate + L-cysteinyl-[protein] + H(+). The catalysed reaction is N(2)-(1-hydroxy-2-oxopropyl)-dGTP + H2O = lactate + dGTP + H(+). The enzyme catalyses N(2)-(1-hydroxy-2-oxopropyl)-GTP + H2O = lactate + GTP + H(+). It carries out the reaction N(2)-(1-hydroxy-2-oxopropyl)-GDP + H2O = lactate + GDP + H(+). It catalyses the reaction N(2)-(1-hydroxy-2-oxopropyl)-GMP + H2O = lactate + GMP + H(+). The catalysed reaction is N(2)-(1-hydroxy-2-oxoethyl)-dGTP + H2O = dGTP + glycolate + H(+). The enzyme catalyses N(2)-(1-hydroxy-2-oxoethyl)-GTP + H2O = glycolate + GTP + H(+). It carries out the reaction N(2)-(1-hydroxy-2-oxoethyl)-GDP + H2O = glycolate + GDP + H(+). It catalyses the reaction N(2)-(1-hydroxy-2-oxoethyl)-GMP + H2O = glycolate + GMP + H(+). The catalysed reaction is an N(2)-(1-hydroxy-2-oxopropyl)-guanosine in RNA + H2O = a guanosine in RNA + lactate + H(+). The enzyme catalyses an N(2)-(1-hydroxy-2-oxopropyl)-2'-deoxyguanosine in DNA + H2O = a 2'-deoxyguanosine in DNA + lactate + H(+). It carries out the reaction an N(2)-(1-hydroxy-2-oxoethyl)-guanosine in RNA + H2O = a guanosine in RNA + glycolate + H(+). It catalyses the reaction an N(2)-(1-hydroxy-2-oxoethyl)-2'-deoxyguanosine in DNA + H2O = a 2'-deoxyguanosine in DNA + glycolate + H(+). In terms of biological role, protein and nucleotide deglycase that catalyzes the deglycation of the Maillard adducts formed between amino groups of proteins or nucleotides and reactive carbonyl groups of glyoxals. Thus, functions as a protein deglycase that repairs methylglyoxal- and glyoxal-glycated proteins, and releases repaired proteins and lactate or glycolate, respectively. Deglycates cysteine, arginine and lysine residues in proteins, and thus reactivates these proteins by reversing glycation by glyoxals. Acts on early glycation intermediates (hemithioacetals and aminocarbinols), preventing the formation of Schiff bases and advanced glycation endproducts (AGE). Also functions as a nucleotide deglycase able to repair glycated guanine in the free nucleotide pool (GTP, GDP, GMP, dGTP) and in DNA and RNA. Is thus involved in a major nucleotide repair system named guanine glycation repair (GG repair), dedicated to reversing methylglyoxal and glyoxal damage via nucleotide sanitization and direct nucleic acid repair. Plays an important role in protecting cells from carbonyl stress. The sequence is that of Protein/nucleic acid deglycase HchA from Shigella sonnei (strain Ss046).